A 76-amino-acid polypeptide reads, in one-letter code: Large ribosomal subunit protein bL31 (76 aa).

It belongs to the bacterial ribosomal protein bL31 family. Type A subfamily. In terms of assembly, part of the 50S ribosomal subunit.

Its function is as follows. Binds the 23S rRNA. The polypeptide is Large ribosomal subunit protein bL31 (Methylocella silvestris (strain DSM 15510 / CIP 108128 / LMG 27833 / NCIMB 13906 / BL2)).